Here is a 392-residue protein sequence, read N- to C-terminus: Formate-dependent phosphoribosylglycinamide formyltransferase (392 aa).

N(1)-(5-phospho-beta-D-ribosyl)glycinamide contacts are provided by residues 22-23 (EL) and E82. ATP-binding positions include R114, K155, 160 to 165 (SSGKGQ), 195 to 198 (EGVV), and E203. One can recognise an ATP-grasp domain in the interval 119-308 (RLAAEELGLP…EFALHVRAFL (190 aa)). Mg(2+) contacts are provided by E267 and E279. Residues D286, K355, and 362-363 (RR) each bind N(1)-(5-phospho-beta-D-ribosyl)glycinamide.

Belongs to the PurK/PurT family. Homodimer.

It carries out the reaction N(1)-(5-phospho-beta-D-ribosyl)glycinamide + formate + ATP = N(2)-formyl-N(1)-(5-phospho-beta-D-ribosyl)glycinamide + ADP + phosphate + H(+). The protein operates within purine metabolism; IMP biosynthesis via de novo pathway; N(2)-formyl-N(1)-(5-phospho-D-ribosyl)glycinamide from N(1)-(5-phospho-D-ribosyl)glycinamide (formate route): step 1/1. Involved in the de novo purine biosynthesis. Catalyzes the transfer of formate to 5-phospho-ribosyl-glycinamide (GAR), producing 5-phospho-ribosyl-N-formylglycinamide (FGAR). Formate is provided by PurU via hydrolysis of 10-formyl-tetrahydrofolate. This Salmonella arizonae (strain ATCC BAA-731 / CDC346-86 / RSK2980) protein is Formate-dependent phosphoribosylglycinamide formyltransferase.